The sequence spans 565 residues: NAD-dependent malic enzyme (565 aa).

The Proton donor role is filled by tyrosine 104. Residue arginine 157 coordinates NAD(+). The Proton acceptor role is filled by lysine 175. A divalent metal cation contacts are provided by glutamate 246, aspartate 247, and aspartate 270. Residues aspartate 270 and asparagine 418 each coordinate NAD(+).

The protein belongs to the malic enzymes family. In terms of assembly, homotetramer. Mg(2+) is required as a cofactor. It depends on Mn(2+) as a cofactor.

It catalyses the reaction (S)-malate + NAD(+) = pyruvate + CO2 + NADH. The catalysed reaction is oxaloacetate + H(+) = pyruvate + CO2. In Escherichia coli O157:H7, this protein is NAD-dependent malic enzyme.